Consider the following 213-residue polypeptide: Na(+)-translocating NADH-quinone reductase subunit D (213 aa).

A run of 6 helical transmembrane segments spans residues 22-42 (LIAI…TTAL), 43-63 (TMGF…SLLR), 77-97 (IIIS…FFTI), 101-121 (LSVF…AESM), 131-151 (FLDG…ISII), and 183-203 (LGLM…IWIV).

The protein belongs to the NqrDE/RnfAE family. In terms of assembly, composed of six subunits; NqrA, NqrB, NqrC, NqrD, NqrE and NqrF.

The protein resides in the cell inner membrane. The enzyme catalyses a ubiquinone + n Na(+)(in) + NADH + H(+) = a ubiquinol + n Na(+)(out) + NAD(+). NQR complex catalyzes the reduction of ubiquinone-1 to ubiquinol by two successive reactions, coupled with the transport of Na(+) ions from the cytoplasm to the periplasm. NqrA to NqrE are probably involved in the second step, the conversion of ubisemiquinone to ubiquinol. The chain is Na(+)-translocating NADH-quinone reductase subunit D from Chlamydia trachomatis serovar L2 (strain ATCC VR-902B / DSM 19102 / 434/Bu).